The sequence spans 755 residues: Subtilisin-like protease 4 (755 aa).

The N-terminal stretch at 1-20 (MDYFLFIALTFLLTFHVHNA) is a signal peptide. Residues 41–119 (YIIHVTGPEG…ISAHPQRVLH (79 aa)) enclose the Inhibitor I9 domain. In terms of domain architecture, Peptidase S8 spans 128–611 (FLGLQQDTGV…SGHVNPSRAN (484 aa)). The active-site Charge relay system is Asp153. N-linked (GlcNAc...) asparagine glycosylation is present at Asn182. His217 functions as the Charge relay system in the catalytic mechanism. Residues Asn297, Asn325, Asn393, Asn468, and Asn529 are each glycosylated (N-linked (GlcNAc...) asparagine). The PA domain occupies 376–461 (PLAYAGKNGK…ATHVSYAAGI (86 aa)). The active-site Charge relay system is Ser544. 2 N-linked (GlcNAc...) asparagine glycosylation sites follow: Asn706 and Asn727.

It belongs to the peptidase S8 family.

The protein resides in the secreted. It is found in the extracellular space. Its subcellular location is the apoplast. Functionally, required for arbuscular mycorrhiza (AM) development during AM symbiosis with AM fungi (e.g. Glomeromycota intraradices). The chain is Subtilisin-like protease 4 from Lotus japonicus (Lotus corniculatus var. japonicus).